A 283-amino-acid chain; its full sequence is Energy-coupling factor transporter ATP-binding protein EcfA1 (283 aa).

Positions 7-244 (VEFRHVSFTY…PELLQEIGLD (238 aa)) constitute an ABC transporter domain. 41–48 (GHNGSGKS) provides a ligand contact to ATP.

The protein belongs to the ABC transporter superfamily. Energy-coupling factor EcfA family. As to quaternary structure, forms a stable energy-coupling factor (ECF) transporter complex composed of 2 membrane-embedded substrate-binding proteins (S component), 2 ATP-binding proteins (A component) and 2 transmembrane proteins (T component).

The protein localises to the cell membrane. Its function is as follows. ATP-binding (A) component of a common energy-coupling factor (ECF) ABC-transporter complex. Unlike classic ABC transporters this ECF transporter provides the energy necessary to transport a number of different substrates. The protein is Energy-coupling factor transporter ATP-binding protein EcfA1 of Lactobacillus acidophilus (strain ATCC 700396 / NCK56 / N2 / NCFM).